The primary structure comprises 455 residues: tRNA modification GTPase MnmE (455 aa).

The (6S)-5-formyl-5,6,7,8-tetrahydrofolate site is built by Arg24, Glu81, and Lys120. In terms of domain architecture, TrmE-type G spans 216-378 (GMTVVIAGRP…LREHLKACMG (163 aa)). Asn226 provides a ligand contact to K(+). GTP contacts are provided by residues 226 to 231 (NAGKSS), 245 to 251 (TDIAGTT), 270 to 273 (DTAG), and 335 to 338 (NKAD). Ser230 contributes to the Mg(2+) binding site. Residues Thr245, Ile247, and Thr250 each coordinate K(+). Thr251 contacts Mg(2+). Lys455 is a binding site for (6S)-5-formyl-5,6,7,8-tetrahydrofolate.

It belongs to the TRAFAC class TrmE-Era-EngA-EngB-Septin-like GTPase superfamily. TrmE GTPase family. In terms of assembly, homodimer. Heterotetramer of two MnmE and two MnmG subunits. K(+) serves as cofactor.

The protein localises to the cytoplasm. Its function is as follows. Exhibits a very high intrinsic GTPase hydrolysis rate. Involved in the addition of a carboxymethylaminomethyl (cmnm) group at the wobble position (U34) of certain tRNAs, forming tRNA-cmnm(5)s(2)U34. This chain is tRNA modification GTPase MnmE, found in Ectopseudomonas mendocina (strain ymp) (Pseudomonas mendocina).